The primary structure comprises 124 residues: MARIAGIDLPKNKRIEIALTYIYGIGRPTAQKILEQANIDGNTKSDDLTENQINSIRHVIDSHYKVEGDLRTEVSMNIKRLMDLGCYRGLRHRRGLPVRGQRTHTNARTRKGPRRSVMGKRKKA.

The tract at residues 95 to 124 (GLPVRGQRTHTNARTRKGPRRSVMGKRKKA) is disordered.

Belongs to the universal ribosomal protein uS13 family. As to quaternary structure, part of the 30S ribosomal subunit. Forms a loose heterodimer with protein S19. Forms two bridges to the 50S subunit in the 70S ribosome.

Its function is as follows. Located at the top of the head of the 30S subunit, it contacts several helices of the 16S rRNA. In the 70S ribosome it contacts the 23S rRNA (bridge B1a) and protein L5 of the 50S subunit (bridge B1b), connecting the 2 subunits; these bridges are implicated in subunit movement. Contacts the tRNAs in the A and P-sites. This Syntrophobacter fumaroxidans (strain DSM 10017 / MPOB) protein is Small ribosomal subunit protein uS13.